The primary structure comprises 242 residues: Small ribosomal subunit protein uS3 (242 aa).

Residues 39-110 (IRKFIHKKYG…QVRINVVEVE (72 aa)) enclose the KH type-2 domain. The interval 216-242 (QTMPVGANPRRRASRRPQQFEDRSNEG) is disordered. Residues 233-242 (QQFEDRSNEG) show a composition bias toward basic and acidic residues.

Belongs to the universal ribosomal protein uS3 family. As to quaternary structure, part of the 30S ribosomal subunit. Forms a tight complex with proteins S10 and S14.

Functionally, binds the lower part of the 30S subunit head. Binds mRNA in the 70S ribosome, positioning it for translation. The polypeptide is Small ribosomal subunit protein uS3 (Synechococcus sp. (strain CC9902)).